The primary structure comprises 314 residues: MMALQSTRDPKEFGRVAVLFGGKSAEREVSLKSGAAVLAALQAAGVDAFGIDAGDDLLQRLSSERIDRAFIVLHGRGGEDGSMQGLLECAGIPYTGSGILASALAMDKLRTKQVWQSLGLPTPRHAVLASEVDCQAAAQMLGFPLIVKPAHEGSSIGMAKVGDVAELIAAWRAASAYDAQVLVEQWIQGPEFTVAVLHGEVLPPIGLGTPHTFYDYDAKYLASDTQYRIPCGLDAAREEALKVLSARACEAVGIRGWARVDVMQDAEGNFWLLEVNTVPGMTDHSLVPMAARAAGLDFQQLVLSILDDSLEAGN.

One can recognise an ATP-grasp domain in the interval 112 to 307 (KQVWQSLGLP…FQQLVLSILD (196 aa)). 138–193 (AQMLGFPLIVKPAHEGSSIGMAKVGDVAELIAAWRAASAYDAQVLVEQWIQGPEFT) serves as a coordination point for ATP. Mg(2+) is bound by residues Asp-261, Glu-274, and Asn-276.

This sequence belongs to the D-alanine--D-alanine ligase family. Mg(2+) is required as a cofactor. The cofactor is Mn(2+).

The protein resides in the cytoplasm. It catalyses the reaction 2 D-alanine + ATP = D-alanyl-D-alanine + ADP + phosphate + H(+). It functions in the pathway cell wall biogenesis; peptidoglycan biosynthesis. In terms of biological role, cell wall formation. This Stutzerimonas stutzeri (strain A1501) (Pseudomonas stutzeri) protein is D-alanine--D-alanine ligase.